Reading from the N-terminus, the 793-residue chain is Methionine--tRNA ligase (793 aa).

Positions 11–21 match the 'HIGH' region motif; it reads PYVNNFPHLGN. Residues cysteine 142, cysteine 145, cysteine 155, and cysteine 158 each coordinate Zn(2+). Residues 334–338 carry the 'KMSKS' region motif; sequence KFSKS. Lysine 337 contacts ATP. The span at 581-590 shows a compositional bias: basic and acidic residues; the sequence is SQKDRKKSEK. The disordered stretch occupies residues 581 to 610; that stretch reads SQKDRKKSEKGCSACKDSGSSKSDAAASSA. Positions 591–610 are enriched in low complexity; the sequence is GCSACKDSGSSKSDAAASSA. The tRNA-binding domain maps to 622–727; it reads FSKKIALKTA…PWAAPGTPVI (106 aa).

The protein belongs to the class-I aminoacyl-tRNA synthetase family. MetG type 1 subfamily. As to quaternary structure, homodimer. The cofactor is Zn(2+).

The protein resides in the cytoplasm. The catalysed reaction is tRNA(Met) + L-methionine + ATP = L-methionyl-tRNA(Met) + AMP + diphosphate. Functionally, is required not only for elongation of protein synthesis but also for the initiation of all mRNA translation through initiator tRNA(fMet) aminoacylation. The protein is Methionine--tRNA ligase of Treponema denticola (strain ATCC 35405 / DSM 14222 / CIP 103919 / JCM 8153 / KCTC 15104).